We begin with the raw amino-acid sequence, 338 residues long: Arginine N-succinyltransferase subunit alpha (338 aa).

Belongs to the succinylarginine dihydrolase family. In terms of assembly, heterotetramer of two alpha and two beta subunits.

It catalyses the reaction succinyl-CoA + L-arginine = N(2)-succinyl-L-arginine + CoA + H(+). Its pathway is amino-acid degradation; L-arginine degradation via AST pathway; L-glutamate and succinate from L-arginine: step 1/5. In terms of biological role, catalyzes the transfer of succinyl-CoA to arginine to produce N(2)-succinylarginine. Also acts on L-ornithine. The polypeptide is Arginine N-succinyltransferase subunit alpha (astA) (Pseudomonas aeruginosa (strain ATCC 15692 / DSM 22644 / CIP 104116 / JCM 14847 / LMG 12228 / 1C / PRS 101 / PAO1)).